We begin with the raw amino-acid sequence, 211 residues long: Thymidylate kinase (211 aa).

7–14 (GCEGSGKS) provides a ligand contact to ATP.

Belongs to the thymidylate kinase family.

The catalysed reaction is dTMP + ATP = dTDP + ADP. In terms of biological role, phosphorylation of dTMP to form dTDP in both de novo and salvage pathways of dTTP synthesis. In Chlamydia abortus (strain DSM 27085 / S26/3) (Chlamydophila abortus), this protein is Thymidylate kinase.